Here is a 242-residue protein sequence, read N- to C-terminus: Probable transcriptional regulatory protein Bcen2424_2294 (242 aa).

Belongs to the TACO1 family.

It is found in the cytoplasm. This Burkholderia cenocepacia (strain HI2424) protein is Probable transcriptional regulatory protein Bcen2424_2294.